We begin with the raw amino-acid sequence, 94 residues long: Lipolysis-activating peptide 1-beta chain (94 aa).

A signal peptide spans 1–19 (MKILAVVLISVIVLNTANG). One can recognise an LCN-type CS-alpha/beta domain in the interval 20-87 (ENYYPQKYTN…YFNALESQCP (68 aa)). 3 cysteine pairs are disulfide-bonded: cysteine 34–cysteine 56, cysteine 42–cysteine 66, and cysteine 46–cysteine 68.

It belongs to the long (3 C-C) scorpion toxin superfamily. As to quaternary structure, homodimer; disulfide-linked or monomer (edited version) or heterodimer of an alpha chain (AC P0CI44 or AC P0CI45) and this beta chain (non-edited version). As to expression, expressed by the venom gland.

The protein localises to the secreted. Functionally, the homodimer inhibits HMG-CoA reductase (HMGCR) (32% of inhibition produced by 0.6 uM), a glycoprotein involved in the control of cholesterol biosynthesis. The inhibitory effects of bumarsin are seen at much lower concentrations (0.6 uM) than that for statins such as atorvastatin (5 mM) and simvastatin (10 uM). In addition to inhibition of HMG-CoA reductase, this protein lowers cholesterol levels by inducing steroid hormone synthesis via StAR, and by increasing reverse cholesterol transport mediated by the induction of ABCA1 and APOA1. In terms of biological role, the heterodimer non-edited LVP1 induces lipolysis in rat adipocytes. Induction of lipolysis by LVP1 appears to be mediated through the beta-2 adrenergic receptor pathway (ADRB2). The monomer edited version, similar to alpha-toxins, may modulate voltage-gated sodium channels (Nav) and may block voltage-gated potassium channels (Kv). This Lychas mucronatus (Chinese swimming scorpion) protein is Lipolysis-activating peptide 1-beta chain.